The chain runs to 157 residues: 3-hydroxybutyryl-CoA dehydratase (157 aa).

The 99-residue stretch at 22–120 folds into the MaoC-like domain; it reads KKEISSSDVV…IPERRRARLA (99 aa).

The enzyme catalyses (3R)-3-hydroxybutanoyl-CoA = (2E)-butenoyl-CoA + H2O. Its function is as follows. Involved in the regeneration of glyoxylate from a molecule of acetyl-CoA. This Methylorubrum extorquens (strain ATCC 14718 / DSM 1338 / JCM 2805 / NCIMB 9133 / AM1) (Methylobacterium extorquens) protein is 3-hydroxybutyryl-CoA dehydratase.